Reading from the N-terminus, the 679-residue chain is Methionine--tRNA ligase (679 aa).

Positions 15-25 (PYANGPIHLGH) match the 'HIGH' region motif. Zn(2+) is bound by residues Cys146, Cys149, Cys159, and Cys162. The 'KMSKS' region signature appears at 332–336 (KMSKS). An ATP-binding site is contributed by Lys335. The region spanning 578 to 679 (DFAKIDLRIA…EGAQPGMKVK (102 aa)) is the tRNA-binding domain.

It belongs to the class-I aminoacyl-tRNA synthetase family. MetG type 1 subfamily. As to quaternary structure, homodimer. The cofactor is Zn(2+).

The protein resides in the cytoplasm. The enzyme catalyses tRNA(Met) + L-methionine + ATP = L-methionyl-tRNA(Met) + AMP + diphosphate. Functionally, is required not only for elongation of protein synthesis but also for the initiation of all mRNA translation through initiator tRNA(fMet) aminoacylation. The chain is Methionine--tRNA ligase from Shewanella halifaxensis (strain HAW-EB4).